The following is a 157-amino-acid chain: Probable succinate transporter subunit YjjB (157 aa).

Helical transmembrane passes span 8–28, 50–70, 87–107, and 129–149; these read LALAQDMILAAIPAVGFAMVF, MILMTSGLNIEWSTFMASMLV, VFTVAAVIPMFPGISAYTAMI, and FLTASSIVGALSIGLSIPGLW.

This sequence belongs to the ThrE exporter (TC 2.A.79) family. In terms of assembly, the transporter is composed of YjjB and YjjP.

The protein resides in the cell inner membrane. In terms of biological role, involved in succinate export with YjjP. Both proteins are required for export. In Escherichia coli O1:K1 / APEC, this protein is Probable succinate transporter subunit YjjB.